Consider the following 410-residue polypeptide: Multifunctional CCA protein (410 aa).

Residues G8 and R11 each contribute to the ATP site. Positions 8 and 11 each coordinate CTP. Residues E21 and D23 each coordinate Mg(2+). 3 residues coordinate ATP: R91, R137, and R140. CTP is bound by residues R91, R137, and R140. The HD domain maps to 228 to 329; the sequence is TGVHVLSVLR…LELLQRFDVF (102 aa).

This sequence belongs to the tRNA nucleotidyltransferase/poly(A) polymerase family. Bacterial CCA-adding enzyme type 1 subfamily. As to quaternary structure, monomer. Can also form homodimers and oligomers. The cofactor is Mg(2+). It depends on Ni(2+) as a cofactor.

It carries out the reaction a tRNA precursor + 2 CTP + ATP = a tRNA with a 3' CCA end + 3 diphosphate. The enzyme catalyses a tRNA with a 3' CCA end + 2 CTP + ATP = a tRNA with a 3' CCACCA end + 3 diphosphate. Functionally, catalyzes the addition and repair of the essential 3'-terminal CCA sequence in tRNAs without using a nucleic acid template. Adds these three nucleotides in the order of C, C, and A to the tRNA nucleotide-73, using CTP and ATP as substrates and producing inorganic pyrophosphate. tRNA 3'-terminal CCA addition is required both for tRNA processing and repair. Also involved in tRNA surveillance by mediating tandem CCA addition to generate a CCACCA at the 3' terminus of unstable tRNAs. While stable tRNAs receive only 3'-terminal CCA, unstable tRNAs are marked with CCACCA and rapidly degraded. The polypeptide is Multifunctional CCA protein (Ectopseudomonas mendocina (strain ymp) (Pseudomonas mendocina)).